Here is a 630-residue protein sequence, read N- to C-terminus: Long-chain-fatty-acid--AMP ligase FadD32 (630 aa).

Residues 187 to 192, Ser-342, Ala-346, Asp-469, and Arg-483 each bind ATP; that span reads TSGSTR.

This sequence belongs to the ATP-dependent AMP-binding enzyme family. In terms of assembly, monomer.

The catalysed reaction is a long-chain fatty acid + holo-[ACP] + ATP = a long-chain fatty acyl-[ACP] + AMP + diphosphate. It catalyses the reaction decanoate + ATP + H(+) = decanoyl-AMP + diphosphate. It carries out the reaction dodecanoate + ATP + H(+) = dodecanoyl-AMP + diphosphate. The enzyme catalyses tetradecanoate + ATP + H(+) = tetradecanoyl-AMP + diphosphate. Its pathway is lipid metabolism; mycolic acid biosynthesis. Its activity is regulated as follows. The acyl-AMP ligase activity is inhibited by the alkylphosphate ester of AMP, adenosine 50-dodecylphosphate (AMPC12). Also inhibited by eicosyl-AMP (AMPC20). In terms of biological role, involved in the biosynthesis of mycolic acids. Catalyzes the activation of long-chain fatty acids as acyl-adenylates (acyl-AMP), which are then transferred to the phosphopantetheine arm of the polyketide synthase Pks13 for further chain extension. Can use decanoate (C10), dodecanoate (C12) and tetradecanoate (C14). This Mycolicibacterium smegmatis (strain ATCC 700084 / mc(2)155) (Mycobacterium smegmatis) protein is Long-chain-fatty-acid--AMP ligase FadD32.